Consider the following 215-residue polypeptide: LexA repressor (215 aa).

Residues 28-48 (RAEIAAELGFSSPNAAEEHLR) constitute a DNA-binding region (H-T-H motif). Residues S133 and K170 each act as for autocatalytic cleavage activity in the active site.

This sequence belongs to the peptidase S24 family. In terms of assembly, homodimer.

The enzyme catalyses Hydrolysis of Ala-|-Gly bond in repressor LexA.. Its function is as follows. Represses a number of genes involved in the response to DNA damage (SOS response), including recA and lexA. In the presence of single-stranded DNA, RecA interacts with LexA causing an autocatalytic cleavage which disrupts the DNA-binding part of LexA, leading to derepression of the SOS regulon and eventually DNA repair. The protein is LexA repressor of Burkholderia cenocepacia (strain ATCC BAA-245 / DSM 16553 / LMG 16656 / NCTC 13227 / J2315 / CF5610) (Burkholderia cepacia (strain J2315)).